Reading from the N-terminus, the 1059-residue chain is DNA-directed RNA polymerase subunit beta (1059 aa).

Belongs to the RNA polymerase beta chain family. As to quaternary structure, in plastids the minimal PEP RNA polymerase catalytic core is composed of four subunits: alpha, beta, beta', and beta''. When a (nuclear-encoded) sigma factor is associated with the core the holoenzyme is formed, which can initiate transcription (Potential).

It is found in the plastid. The protein localises to the apicoplast. The catalysed reaction is RNA(n) + a ribonucleoside 5'-triphosphate = RNA(n+1) + diphosphate. Functionally, DNA-dependent RNA polymerase catalyzes the transcription of DNA into RNA using the four ribonucleoside triphosphates as substrates. In Eimeria tenella (Coccidian parasite), this protein is DNA-directed RNA polymerase subunit beta (rpoB).